Consider the following 314-residue polypeptide: ATP synthase gamma chain (314 aa).

This sequence belongs to the ATPase gamma chain family. As to quaternary structure, F-type ATPases have 2 components, CF(1) - the catalytic core - and CF(0) - the membrane proton channel. CF(1) has five subunits: alpha(3), beta(3), gamma(1), delta(1), epsilon(1). CF(0) has three main subunits: a, b and c.

It localises to the cellular thylakoid membrane. Functionally, produces ATP from ADP in the presence of a proton gradient across the membrane. The gamma chain is believed to be important in regulating ATPase activity and the flow of protons through the CF(0) complex. The polypeptide is ATP synthase gamma chain (Rippkaea orientalis (strain PCC 8801 / RF-1) (Cyanothece sp. (strain PCC 8801))).